A 1510-amino-acid chain; its full sequence is Chromosome partition protein MukB (1510 aa).

75 to 82 serves as a coordination point for ATP; that stretch reads GGNGAGKS. Residues 346 to 706 adopt a coiled-coil conformation; the sequence is QHRLVDLSRE…LDEQISRLSQ (361 aa). Residues 707 to 824 form a flexible hinge region; it reads PDGSEDPRLN…EIPLFGCAAR (118 aa). 2 coiled-coil regions span residues 825-1154 and 1248-1304; these read EKRL…AAKV and IDAI…LQNI.

It belongs to the SMC family. MukB subfamily. Homodimerization via its hinge domain. Binds to DNA via its C-terminal region. Interacts, and probably forms a ternary complex, with MukE and MukF via its C-terminal region. The complex formation is stimulated by calcium or magnesium. Interacts with tubulin-related protein FtsZ.

The protein resides in the cytoplasm. It is found in the nucleoid. Plays a central role in chromosome condensation, segregation and cell cycle progression. Functions as a homodimer, which is essential for chromosome partition. Involved in negative DNA supercoiling in vivo, and by this means organize and compact chromosomes. May achieve or facilitate chromosome segregation by condensation DNA from both sides of a centrally located replisome during cell division. This is Chromosome partition protein MukB from Haemophilus influenzae (strain ATCC 51907 / DSM 11121 / KW20 / Rd).